Here is a 273-residue protein sequence, read N- to C-terminus: Transposable element Tcb2 transposase (273 aa).

The protein belongs to the transposase 5 family.

Its subcellular location is the nucleus. Functionally, probably essential for transposable element Tcb2 transposition. The sequence is that of Transposable element Tcb2 transposase from Caenorhabditis briggsae.